The chain runs to 422 residues: 3-phosphoshikimate 1-carboxyvinyltransferase (422 aa).

Lys-20, Ser-21, and Arg-25 together coordinate 3-phosphoshikimate. Lys-20 lines the phosphoenolpyruvate pocket. Phosphoenolpyruvate contacts are provided by Gly-92 and Arg-120. Positions 163, 164, 165, 191, 304, and 331 each coordinate 3-phosphoshikimate. Residue Gln-165 coordinates phosphoenolpyruvate. Catalysis depends on Asp-304, which acts as the Proton acceptor. The phosphoenolpyruvate site is built by Arg-335 and Arg-377.

It belongs to the EPSP synthase family. In terms of assembly, monomer.

It localises to the cytoplasm. It catalyses the reaction 3-phosphoshikimate + phosphoenolpyruvate = 5-O-(1-carboxyvinyl)-3-phosphoshikimate + phosphate. Its pathway is metabolic intermediate biosynthesis; chorismate biosynthesis. Its function is as follows. Catalyzes the transfer of the enolpyruvyl moiety of phosphoenolpyruvate (PEP) to the 5-hydroxyl of shikimate-3-phosphate (S3P) to produce enolpyruvyl shikimate-3-phosphate and inorganic phosphate. The protein is 3-phosphoshikimate 1-carboxyvinyltransferase of Methanocorpusculum labreanum (strain ATCC 43576 / DSM 4855 / Z).